A 774-amino-acid chain; its full sequence is Phosphoribosylformylglycinamidine synthase subunit PurL (774 aa).

Residue His51 is part of the active site. ATP is bound by residues Tyr54 and Lys93. Residue Glu95 participates in Mg(2+) binding. Residues 96–99 and Arg118 contribute to the substrate site; that span reads SHNH. His97 functions as the Proton acceptor in the catalytic mechanism. Position 119 (Asp119) interacts with Mg(2+). Gln242 is a substrate binding site. Asp270 provides a ligand contact to Mg(2+). A substrate-binding site is contributed by 314-316; that stretch reads ESQ. ATP is bound by residues Asp514 and Gly551. Asn552 contributes to the Mg(2+) binding site. Ser554 serves as a coordination point for substrate.

It belongs to the FGAMS family. In terms of assembly, monomer. Part of the FGAM synthase complex composed of 1 PurL, 1 PurQ and 2 PurS subunits.

The protein localises to the cytoplasm. The enzyme catalyses N(2)-formyl-N(1)-(5-phospho-beta-D-ribosyl)glycinamide + L-glutamine + ATP + H2O = 2-formamido-N(1)-(5-O-phospho-beta-D-ribosyl)acetamidine + L-glutamate + ADP + phosphate + H(+). It functions in the pathway purine metabolism; IMP biosynthesis via de novo pathway; 5-amino-1-(5-phospho-D-ribosyl)imidazole from N(2)-formyl-N(1)-(5-phospho-D-ribosyl)glycinamide: step 1/2. Functionally, part of the phosphoribosylformylglycinamidine synthase complex involved in the purines biosynthetic pathway. Catalyzes the ATP-dependent conversion of formylglycinamide ribonucleotide (FGAR) and glutamine to yield formylglycinamidine ribonucleotide (FGAM) and glutamate. The FGAM synthase complex is composed of three subunits. PurQ produces an ammonia molecule by converting glutamine to glutamate. PurL transfers the ammonia molecule to FGAR to form FGAM in an ATP-dependent manner. PurS interacts with PurQ and PurL and is thought to assist in the transfer of the ammonia molecule from PurQ to PurL. This is Phosphoribosylformylglycinamidine synthase subunit PurL from Gloeobacter violaceus (strain ATCC 29082 / PCC 7421).